The following is a 101-amino-acid chain: Small ribosomal subunit protein uS14A (101 aa).

The segment at 31 to 74 (IRKPSTPEADRAAAQAALQRLPRDASPVRLRNRDAADGRPRGHL) is disordered. The span at 61–70 (RNRDAADGRP) shows a compositional bias: basic and acidic residues.

It belongs to the universal ribosomal protein uS14 family. Part of the 30S ribosomal subunit. Contacts proteins S3 and S10.

In terms of biological role, binds 16S rRNA, required for the assembly of 30S particles and may also be responsible for determining the conformation of the 16S rRNA at the A site. This is Small ribosomal subunit protein uS14A from Nocardia farcinica (strain IFM 10152).